We begin with the raw amino-acid sequence, 460 residues long: Bifunctional beta-D-glucosidase/beta-D-fucosidase (460 aa).

Glutamate 168 acts as the Proton donor in catalysis. The active-site Nucleophile is the glutamate 362.

The protein belongs to the glycosyl hydrolase 1 family. In terms of assembly, monomer.

Its subcellular location is the secreted. The enzyme catalyses Hydrolysis of terminal, non-reducing beta-D-glucosyl residues with release of beta-D-glucose.. It catalyses the reaction Hydrolysis of terminal non-reducing beta-D-fucose residues in beta-D-fucosides.. Its activity is regulated as follows. Inhibited by Cu(2+), Ag(+) and Hg(+), but not by other cations such as Mg(2+), Ca(2+), Mn(2+) and Co(2+). Inhibited by 1-amino-1-deoxy-D-glucose and p-chloromercuribenzoic acid, but not by EDTA or dithiothreitol. Inhibited by the disaccharides sucrose, lactose and cellobiose. The monosaccharides D-fructose, D-mannose, D-xylose and D-glucose increase the beta-D-fucosidase activity, but not the beta-D-glucosidase activity. D-glucose inhibits the beta-D-glucosidase activity, but promotes the beta-D-fucosidase activity. D-fucose inhibits the beta-D-glucosidase activity and does not significantly affect the beta-D-fucosidase activity. In terms of biological role, bifunctional beta-D-glucosidase/beta-D-fucosidase. Activity towards pNP-beta-D-fucoside is about 80-85% of the activity towards pNP-beta-D-glucoside. Also has slight activity (less than 10%) towards pNP-beta-D-galactoside, and very low activity (less than 1%) towards pNP-beta-D-xyloside. Hydrolyzes laminaribiose, sophorose, cellobiose and gentobiose. Not active against maltose, pNP-alpha-D-glucoside or pNP-beta-L-fucoside. The protein is Bifunctional beta-D-glucosidase/beta-D-fucosidase of Bifidobacterium breve.